The sequence spans 860 residues: Leucine--tRNA ligase (860 aa).

Positions 42-52 (PYPSGRLHMGH) match the 'HIGH' region motif. The short motif at 619-623 (KMSKS) is the 'KMSKS' region element. ATP is bound at residue Lys-622.

It belongs to the class-I aminoacyl-tRNA synthetase family.

It is found in the cytoplasm. It catalyses the reaction tRNA(Leu) + L-leucine + ATP = L-leucyl-tRNA(Leu) + AMP + diphosphate. This Pasteurella multocida (strain Pm70) protein is Leucine--tRNA ligase.